Here is a 489-residue protein sequence, read N- to C-terminus: Lysine--tRNA ligase (489 aa).

Residues Glu-399 and Glu-406 each coordinate Mg(2+).

This sequence belongs to the class-II aminoacyl-tRNA synthetase family. In terms of assembly, homodimer. It depends on Mg(2+) as a cofactor.

It localises to the cytoplasm. It carries out the reaction tRNA(Lys) + L-lysine + ATP = L-lysyl-tRNA(Lys) + AMP + diphosphate. The chain is Lysine--tRNA ligase from Synechococcus sp. (strain CC9311).